The following is a 291-amino-acid chain: MEEGLIDRLLETLWLDRRLSQNTLNGYRRDLEKIARRLSQSGRMLKDADEADLAAAVYVDGEQRSSQARALSACKRLYIWMEREGIRTDNPTRLLKPPKIDKNIPTLITEQQISRLLAAPDTDTPHGLRDKALLELMYATGLRVSEAVGLNFGNVDLDRGCITALGKGDKQRMVPMGQESAYWVERYYTEARPLLLKGRNCDALFVSQKKTGISRQLAWMIVKEYASQAGIGHISPHSLRHAFATHLVRHGLDLRVVQDMLGHADLNTTQIYTHVANVWLQGVVKEHHSRN.

Positions 1 to 82 (MEEGLIDRLL…ACKRLYIWME (82 aa)) constitute a Core-binding (CB) domain. The 183-residue stretch at 103-285 (NIPTLITEQQ…ANVWLQGVVK (183 aa)) folds into the Tyr recombinase domain. Catalysis depends on residues Arg-143, Lys-167, His-237, Arg-240, and His-263. The active-site O-(3'-phospho-DNA)-tyrosine intermediate is the Tyr-272.

Belongs to the 'phage' integrase family. XerD subfamily. Forms a cyclic heterotetrameric complex composed of two molecules of XerC and two molecules of XerD.

The protein localises to the cytoplasm. In terms of biological role, site-specific tyrosine recombinase, which acts by catalyzing the cutting and rejoining of the recombining DNA molecules. The XerC-XerD complex is essential to convert dimers of the bacterial chromosome into monomers to permit their segregation at cell division. It also contributes to the segregational stability of plasmids. The chain is Tyrosine recombinase XerD from Neisseria meningitidis serogroup B (strain ATCC BAA-335 / MC58).